The following is a 79-amino-acid chain: Sec-independent protein translocase protein TatA (79 aa).

Residues M1–G21 form a helical membrane-spanning segment. A disordered region spans residues A42 to A79. The segment covering D57 to Q66 has biased composition (polar residues). Positions A67–A79 are enriched in basic and acidic residues.

The protein belongs to the TatA/E family. In terms of assembly, the Tat system comprises two distinct complexes: a TatABC complex, containing multiple copies of TatA, TatB and TatC subunits, and a separate TatA complex, containing only TatA subunits. Substrates initially bind to the TatABC complex, which probably triggers association of the separate TatA complex to form the active translocon.

Its subcellular location is the cell inner membrane. Its function is as follows. Part of the twin-arginine translocation (Tat) system that transports large folded proteins containing a characteristic twin-arginine motif in their signal peptide across membranes. TatA could form the protein-conducting channel of the Tat system. This is Sec-independent protein translocase protein TatA from Shewanella denitrificans (strain OS217 / ATCC BAA-1090 / DSM 15013).